The chain runs to 101 residues: Small ribosomal subunit protein uS14A (101 aa).

Residues 29 to 60 (EIIRSPRSTPEQRTAAQNELAHQPRDASAVRV) form a disordered region. The span at 34-45 (PRSTPEQRTAAQ) shows a compositional bias: polar residues.

Belongs to the universal ribosomal protein uS14 family. As to quaternary structure, part of the 30S ribosomal subunit. Contacts proteins S3 and S10.

Binds 16S rRNA, required for the assembly of 30S particles and may also be responsible for determining the conformation of the 16S rRNA at the A site. This is Small ribosomal subunit protein uS14A from Mycolicibacterium paratuberculosis (strain ATCC BAA-968 / K-10) (Mycobacterium paratuberculosis).